Here is a 116-residue protein sequence, read N- to C-terminus: DGIDYAAVTVQLPGGERGGSTGYDNAVALPAGGRGSSMLDPKELGQMNIVFEGVSKSYHDAVALVLPSLKASTYYEESLYKVINTWADIINRALTEAVAAEAAAAEDPEMETMYTK.

This sequence belongs to the PsbO family.

Its subcellular location is the plastid. The protein localises to the chloroplast thylakoid membrane. Functionally, stabilizes the manganese cluster which is the primary site of water splitting. In Pinus strobus (Eastern white pine), this protein is Putative oxygen-evolving enhancer protein 1.